Here is a 221-residue protein sequence, read N- to C-terminus: MVKTWDEFLEQEAKQPYFIELMKAVSEAREEGNVYPSEEDMFSCFRLCPYDKVKVVILGQDPYHGPGQAHGLSFSVQKDVRIPPSLRNIYKELKSDLDIDPANHGYLAKWAEQGVLLMNTSWSVEEGKAGSHKKLGWATFTDHVLEELNNYDKPLVFILWGNHAIKAASGITNPKHLLIKGVHPSPLAASRGFFGSKPFSKTNEFLKENNRTPIDWDLNSK.

Asp61 serves as the catalytic Proton acceptor.

Belongs to the uracil-DNA glycosylase (UDG) superfamily. UNG family.

Its subcellular location is the cytoplasm. The enzyme catalyses Hydrolyzes single-stranded DNA or mismatched double-stranded DNA and polynucleotides, releasing free uracil.. Functionally, excises uracil residues from the DNA which can arise as a result of misincorporation of dUMP residues by DNA polymerase or due to deamination of cytosine. The sequence is that of Uracil-DNA glycosylase 1 from Listeria innocua serovar 6a (strain ATCC BAA-680 / CLIP 11262).